The primary structure comprises 745 residues: Exocyst complex component 3 (745 aa).

Residue K28 is modified to N6-acetyllysine.

This sequence belongs to the SEC6 family. In terms of assembly, the exocyst complex is composed of EXOC1, EXOC2, EXOC3, EXOC4, EXOC5, EXOC6, EXOC7 and EXOC8. Interacts with EXOC3L1. Interacts with BIRC6/bruce. Interacts with MYRIP. Interacts with SLC6A9. In terms of tissue distribution, expressed in epididymis (at protein level).

It is found in the cytoplasm. It localises to the perinuclear region. Its subcellular location is the cell projection. The protein resides in the growth cone. The protein localises to the midbody. It is found in the golgi apparatus. It localises to the neuron projection. Functionally, component of the exocyst complex involved in the docking of exocytic vesicles with fusion sites on the plasma membrane. This chain is Exocyst complex component 3 (EXOC3), found in Homo sapiens (Human).